Consider the following 206-residue polypeptide: Large ribosomal subunit protein uL4 (206 aa).

The protein belongs to the universal ribosomal protein uL4 family. In terms of assembly, part of the 50S ribosomal subunit.

Its function is as follows. One of the primary rRNA binding proteins, this protein initially binds near the 5'-end of the 23S rRNA. It is important during the early stages of 50S assembly. It makes multiple contacts with different domains of the 23S rRNA in the assembled 50S subunit and ribosome. Functionally, forms part of the polypeptide exit tunnel. In Nitrobacter winogradskyi (strain ATCC 25391 / DSM 10237 / CIP 104748 / NCIMB 11846 / Nb-255), this protein is Large ribosomal subunit protein uL4.